Reading from the N-terminus, the 150-residue chain is Large ribosomal subunit protein uL11 (150 aa).

This sequence belongs to the universal ribosomal protein uL11 family. Part of the ribosomal stalk of the 50S ribosomal subunit. Interacts with L10 and the large rRNA to form the base of the stalk. L10 forms an elongated spine to which L12 dimers bind in a sequential fashion forming a multimeric L10(L12)X complex. One or more lysine residues are methylated.

Functionally, forms part of the ribosomal stalk which helps the ribosome interact with GTP-bound translation factors. The polypeptide is Large ribosomal subunit protein uL11 (Azobacteroides pseudotrichonymphae genomovar. CFP2).